Consider the following 446-residue polypeptide: Chromosomal replication initiator protein DnaA (446 aa).

The interval 1–81 is domain I, interacts with DnaA modulators; the sequence is MENISDLWNS…AKLAIRFIIP (81 aa). Positions 81-109 are domain II; it reads PQSQAEEDIDLPSVKQKHAHDESNHLPQS. The tract at residues 110–326 is domain III, AAA+ region; the sequence is MLNPKYTFDT…GALIRVVAYS (217 aa). ATP-binding residues include glycine 154, glycine 156, lysine 157, and threonine 158. Residues 327 to 446 form a domain IV, binds dsDNA region; it reads SLINKDMNAD…HVEEVKDILK (120 aa).

Belongs to the DnaA family. Oligomerizes as a right-handed, spiral filament on DNA at oriC.

Its subcellular location is the cytoplasm. In terms of biological role, plays an essential role in the initiation and regulation of chromosomal replication. ATP-DnaA binds to the origin of replication (oriC) to initiate formation of the DNA replication initiation complex once per cell cycle. Binds the DnaA box (a 9 base pair repeat at the origin) and separates the double-stranded (ds)DNA. Forms a right-handed helical filament on oriC DNA; dsDNA binds to the exterior of the filament while single-stranded (ss)DNA is stabiized in the filament's interior. The ATP-DnaA-oriC complex binds and stabilizes one strand of the AT-rich DNA unwinding element (DUE), permitting loading of DNA polymerase. After initiation quickly degrades to an ADP-DnaA complex that is not apt for DNA replication. Binds acidic phospholipids. The polypeptide is Chromosomal replication initiator protein DnaA (Bacillus mycoides (strain KBAB4) (Bacillus weihenstephanensis)).